The sequence spans 651 residues: Protein SCARECROW 1 (651 aa).

Disordered regions lie at residues 1 to 33 (MGSSSLLLFPSSSSSATHSSYSPSSSSHAITSL) and 188 to 277 (SDPA…KQRD). The segment covering 190–228 (PAPPPPPPPSHPALLPPDATAPPPPPTSVAALPPPPPPQ) has biased composition (pro residues). Residues 253 to 280 (TAEETAAAAAAAKERKEEQRRKQRDEEG) adopt a coiled-coil conformation. A compositionally biased stretch (low complexity) spans 254–263 (AEETAAAAAA). Residues 264–277 (AKERKEEQRRKQRD) show a composition bias toward basic and acidic residues. The GRAS domain maps to 274 to 644 (KQRDEEGLHL…LCLLTASAWR (371 aa)). Residues 281-345 (LHLLTLLLQC…VSSCLGLYAP (65 aa)) form a leucine repeat I (LRI) region. Positions 288–292 (LQCAE) match the LxCxE motif motif. Positions 364–429 (FQVFNGISPF…GGPPRVRLTG (66 aa)) are VHIID. The VHIID motif lies at 395-399 (VHIID). Residues 439–471 (ATGKRLSDFADTLGLPFEFCPVADKAGNLDPEK) are leucine repeat II (LRII). Residues 480-567 (VAVHWLRHSL…QQLLSREIRN (88 aa)) form a PFYRE region. Residues 570-644 (AVGGPARTGD…LCLLTASAWR (75 aa)) form an SAW region.

The protein belongs to the GRAS family. In terms of assembly, interacts with SHR1, but not with SHR2. In terms of tissue distribution, expressed in the initial daughter cell before its asymmetric division and remains expressed in the endodermal cell layer after the division.

The protein localises to the nucleus. Transcription factor required for quiescent center cells specification and maintenance of surrounding stem cells, and for the asymmetric cell division involved in radial pattern formation in roots. Essential for cell division but not differentiation of the ground tissue. Regulates the radial organization of the shoot axial organs. Restricts SHR movment and sequesters it into the nucleus of the endodermis. In Oryza sativa subsp. japonica (Rice), this protein is Protein SCARECROW 1 (SCR1).